Here is a 351-residue protein sequence, read N- to C-terminus: Methylthioribose-1-phosphate isomerase (351 aa).

Residues 53–55 (RGA), arginine 96, and glutamine 205 contribute to the substrate site. Aspartate 246 functions as the Proton donor in the catalytic mechanism. 256–257 (NK) is a binding site for substrate.

The protein belongs to the eIF-2B alpha/beta/delta subunits family. MtnA subfamily.

The catalysed reaction is 5-(methylsulfanyl)-alpha-D-ribose 1-phosphate = 5-(methylsulfanyl)-D-ribulose 1-phosphate. It participates in amino-acid biosynthesis; L-methionine biosynthesis via salvage pathway; L-methionine from S-methyl-5-thio-alpha-D-ribose 1-phosphate: step 1/6. Functionally, catalyzes the interconversion of methylthioribose-1-phosphate (MTR-1-P) into methylthioribulose-1-phosphate (MTRu-1-P). In Synechocystis sp. (strain ATCC 27184 / PCC 6803 / Kazusa), this protein is Methylthioribose-1-phosphate isomerase.